Here is a 219-residue protein sequence, read N- to C-terminus: Guanylate kinase (219 aa).

The 180-residue stretch at 15 to 194 folds into the Guanylate kinase-like domain; sequence GLMFVLSSPS…AFAEVQSILK (180 aa). Residue 22-29 participates in ATP binding; it reads SPSGAGKT.

Belongs to the guanylate kinase family.

It localises to the cytoplasm. The catalysed reaction is GMP + ATP = GDP + ADP. Its function is as follows. Essential for recycling GMP and indirectly, cGMP. The chain is Guanylate kinase from Nitrobacter hamburgensis (strain DSM 10229 / NCIMB 13809 / X14).